Consider the following 1033-residue polypeptide: SIT4-associating protein SAP190 (1033 aa).

Disordered regions lie at residues 32–82, 147–213, and 768–1033; these read DQDD…TTES, PEII…QVET, and FGND…KEAF. The span at 158 to 170 shows a compositional bias: basic and acidic residues; that stretch reads ILIERDRKDKKED. Acidic residues predominate over residues 171–182; that stretch reads AEEGGDSEETTN. A compositionally biased stretch (basic and acidic residues) spans 183-195; that stretch reads DSDHDSGDERSVD. The residue at position 774 (serine 774) is a Phosphoserine. 2 stretches are compositionally biased toward acidic residues: residues 784–793 and 825–838; these read SEDIIGDTEG and ENEENEEDYAEYSD. Phosphoserine is present on residues serine 857, serine 862, and serine 892. Basic and acidic residues predominate over residues 858-879; the sequence is DDGKSKSAESEFTDKISEHRDG. Positions 909-924 are enriched in polar residues; it reads SRSQPSDPKLQDQNIF. Acidic residues predominate over residues 932 to 944; it reads GVGDDDDYMDPND. Phosphothreonine is present on threonine 990. Position 991 is a phosphoserine (serine 991). Residues 1000-1018 are compositionally biased toward acidic residues; that stretch reads ISSDEEDSEDEDEENDMGN.

It belongs to the SAPS family. As to quaternary structure, associates with the SIT4 protein phosphatase catalytic subunit in a cell-cycle-dependent manner. In terms of processing, hyperphosphorylated in the absence of SIT4.

The protein localises to the cytoplasm. Functionally, positive regulator of protein phosphatase SIT4. Involved in the general amino acid control (GAAC) response regulated by TOR. Involved in the dephosphorylation of the elongator complex subunit IKI3. This Saccharomyces cerevisiae (strain ATCC 204508 / S288c) (Baker's yeast) protein is SIT4-associating protein SAP190 (SAP190).